The following is a 322-amino-acid chain: Cytochrome c biogenesis protein CcsA (322 aa).

8 helical membrane-spanning segments follow: residues 15–35 (FSIVSIIITMRLISFFLVDGI), 45–65 (GMIVTFLCLTGLLVTRWTYSG), 72–92 (LYESLIFLSWSFSLIHIVPYF), 98–120 (YLSTITGSSVVFTQGFTTSGLLT), 144–164 (MILGYASLLCGSLLSIALLVI), 226–246 (GISLGFIFLTIGILSGAVWAN), 253–273 (WNWDPKETWAFITWIIFAIYL), and 287–307 (AIVASIGFLIIWICYFGVNLL).

Belongs to the CcmF/CycK/Ccl1/NrfE/CcsA family. May interact with Ccs1.

It localises to the plastid. Its subcellular location is the chloroplast thylakoid membrane. In terms of biological role, required during biogenesis of c-type cytochromes (cytochrome c6 and cytochrome f) at the step of heme attachment. This is Cytochrome c biogenesis protein CcsA from Coffea arabica (Arabian coffee).